Here is a 263-residue protein sequence, read N- to C-terminus: uncharacterized protein (263 aa).

In terms of domain architecture, ABC transporter spans 12–247 (LETQNLAIGY…ENLAKIYRTS (236 aa)). 44 to 51 (GANGAGKS) is a binding site for ATP.

The protein belongs to the ABC transporter superfamily.

This is an uncharacterized protein from Haemophilus influenzae (strain ATCC 51907 / DSM 11121 / KW20 / Rd).